The sequence spans 70 residues: Acyl carrier protein (70 aa).

The Carrier domain maps to 2–70; sequence SDIADRVKKI…ETIQTFGDAP (69 aa). At Ser-37 the chain carries O-(pantetheine 4'-phosphoryl)serine.

This sequence belongs to the acyl carrier protein (ACP) family. Post-translationally, 4'-phosphopantetheine is transferred from CoA to a specific serine of apo-ACP by AcpS. This modification is essential for activity because fatty acids are bound in thioester linkage to the sulfhydryl of the prosthetic group.

It localises to the cytoplasm. It participates in lipid metabolism; fatty acid biosynthesis. Functionally, carrier of the growing fatty acid chain in fatty acid biosynthesis. The polypeptide is Acyl carrier protein (Cereibacter sphaeroides (Rhodobacter sphaeroides)).